The following is a 166-amino-acid chain: Large ribosomal subunit protein uL10 (166 aa).

The protein belongs to the universal ribosomal protein uL10 family. In terms of assembly, part of the ribosomal stalk of the 50S ribosomal subunit. The N-terminus interacts with L11 and the large rRNA to form the base of the stalk. The C-terminus forms an elongated spine to which L12 dimers bind in a sequential fashion forming a multimeric L10(L12)X complex.

In terms of biological role, forms part of the ribosomal stalk, playing a central role in the interaction of the ribosome with GTP-bound translation factors. The polypeptide is Large ribosomal subunit protein uL10 (Pseudomonas putida (strain W619)).